A 263-amino-acid polypeptide reads, in one-letter code: Ribonuclease 3 (263 aa).

Positions 1–23 (MPHSKNQRKHRHHSHSERRRQPK) are disordered. The RNase III domain maps to 35 to 164 (FDELLRTLNL…FVGALYLDQG (130 aa)). Glutamate 77 lines the Mg(2+) pocket. Residue aspartate 81 is part of the active site. Residues aspartate 150 and glutamate 153 each coordinate Mg(2+). The active site involves glutamate 153. Residues 190-259 (DFKSQLQEFI…AQQALITLSQ (70 aa)) enclose the DRBM domain.

The protein belongs to the ribonuclease III family. Homodimer. Mg(2+) serves as cofactor.

Its subcellular location is the cytoplasm. It catalyses the reaction Endonucleolytic cleavage to 5'-phosphomonoester.. Digests double-stranded RNA. Involved in the processing of primary rRNA transcript to yield the immediate precursors to the large and small rRNAs (23S and 16S). Processes some mRNAs, and tRNAs when they are encoded in the rRNA operon. Processes pre-crRNA and tracrRNA of type II CRISPR loci if present in the organism. The sequence is that of Ribonuclease 3 from Halalkalibacterium halodurans (strain ATCC BAA-125 / DSM 18197 / FERM 7344 / JCM 9153 / C-125) (Bacillus halodurans).